The following is a 212-amino-acid chain: ER lumen protein-retaining receptor 1-B (212 aa).

At 1–4 (MNIF) the chain is on the lumenal side. A helical transmembrane segment spans residues 5-24 (RFLGDISHLSAIIILLLKIW). Residues 25 to 32 (KSRSCAGI) lie on the Cytoplasmic side of the membrane. A helical membrane pass occupies residues 33–52 (SGKSQLLFAIVFTTRYLDLF). The segment at 47–48 (RY) is interaction with the K-D-E-L motif on target proteins. Residues 53 to 58 (TNFISF) lie on the Lumenal side of the membrane. The chain crosses the membrane as a helical span at residues 59–79 (YNTSMKVVYVASSYATVWMIY). Residues 80 to 92 (SKFKATYDGNHDT) are Cytoplasmic-facing. A helical transmembrane segment spans residues 93–110 (FRVEFLIVPTAILSFLVN). Residues 111–116 (HDFTPL) are Lumenal-facing. The helical transmembrane segment at 117-135 (EILWTFSIYLESVAILPQL) threads the bilayer. Over 136-149 (FMVSKTGEAETITS) the chain is Cytoplasmic. A helical membrane pass occupies residues 150–168 (HYLFALGIYRTLYLFNWIW). The interval 159–169 (RTLYLFNWIWR) is interaction with the K-D-E-L motif on target proteins. Residues 169–178 (RYQFEEFFDL) lie on the Lumenal side of the membrane. A helical membrane pass occupies residues 179 to 199 (IAIVAGLVQTVLYCDFFYLYI). Over 200 to 212 (TKVLKGKKLSLPA) the chain is Cytoplasmic. The segment at 204–207 (KGKK) is important for recycling of cargo proteins with the sequence motif K-D-E-L from the Golgi to the endoplasmic reticulum.

The protein belongs to the ERD2 family.

It is found in the golgi apparatus membrane. The protein resides in the cytoplasmic vesicle. It localises to the COPI-coated vesicle membrane. The protein localises to the endoplasmic reticulum membrane. Its subcellular location is the endoplasmic reticulum-Golgi intermediate compartment membrane. Its function is as follows. Receptor for the C-terminal sequence motif K-D-E-L that is present on endoplasmic reticulum resident proteins and that mediates their recycling from the Golgi back to the endoplasmic reticulum. The polypeptide is ER lumen protein-retaining receptor 1-B (kdelr1-b) (Xenopus laevis (African clawed frog)).